A 435-amino-acid polypeptide reads, in one-letter code: Putative pyridoxal-phosphate dependent protein F13B12.4 (435 aa).

Positions 1-18 (MKLLLLALFLSISASCLA) are cleaved as a signal peptide. Asn-79 is a glycosylation site (N-linked (GlcNAc...) asparagine). Lys-89 bears the N6-(pyridoxal phosphate)lysine mark. 235 to 239 (GTGGT) lines the pyridoxal 5'-phosphate pocket. Residue Asn-277 is glycosylated (N-linked (GlcNAc...) asparagine). Residue Ser-342 coordinates pyridoxal 5'-phosphate.

The protein belongs to the cysteine synthase/cystathionine beta-synthase family. Highly divergent.

The chain is Putative pyridoxal-phosphate dependent protein F13B12.4 from Caenorhabditis elegans.